The chain runs to 100 residues: Large ribosomal subunit protein uL23 (100 aa).

The protein belongs to the universal ribosomal protein uL23 family. Part of the 50S ribosomal subunit. Contacts protein L29, and trigger factor when it is bound to the ribosome.

In terms of biological role, one of the early assembly proteins it binds 23S rRNA. One of the proteins that surrounds the polypeptide exit tunnel on the outside of the ribosome. Forms the main docking site for trigger factor binding to the ribosome. The polypeptide is Large ribosomal subunit protein uL23 (Shewanella denitrificans (strain OS217 / ATCC BAA-1090 / DSM 15013)).